Consider the following 110-residue polypeptide: MKYLAAYLLLTVGGKQSPSASDIESVLSTVGIEAEAERVESLISELNGKNIEELIAAGNEKLSTVPSAGAVATPAAGGAAGAEATSAAEEAKEEEAAEESDEDMGFGLFD.

Over residues 73–88 (TPAAGGAAGAEATSAA) the composition is skewed to low complexity. The segment at 73-110 (TPAAGGAAGAEATSAAEEAKEEEAAEESDEDMGFGLFD) is disordered. Residues 91-104 (AKEEEAAEESDEDM) show a composition bias toward acidic residues. S100 is modified (phosphoserine).

It belongs to the eukaryotic ribosomal protein P1/P2 family. Component of the large ribosomal subunit (LSU). Mature yeast ribosomes consist of a small (40S) and a large (60S) subunit. The 40S small subunit contains 1 molecule of ribosomal RNA (18S rRNA) and at least 33 different proteins. The large 60S subunit contains 3 rRNA molecules (25S, 5.8S and 5S rRNA) and at least 46 different proteins. The acidic ribosomal P-proteins form the stalk structure of the 60S subunit. They are organized as a pentameric complex in which uL10/P0 interacts with 2 heterodimers of P1 and P2 proteins.

The protein localises to the cytoplasm. Functionally, component of the ribosome, a large ribonucleoprotein complex responsible for the synthesis of proteins in the cell. The small ribosomal subunit (SSU) binds messenger RNAs (mRNAs) and translates the encoded message by selecting cognate aminoacyl-transfer RNA (tRNA) molecules. The large subunit (LSU) contains the ribosomal catalytic site termed the peptidyl transferase center (PTC), which catalyzes the formation of peptide bonds, thereby polymerizing the amino acids delivered by tRNAs into a polypeptide chain. The nascent polypeptides leave the ribosome through a tunnel in the LSU and interact with protein factors that function in enzymatic processing, targeting, and the membrane insertion of nascent chains at the exit of the ribosomal tunnel. This Schizosaccharomyces pombe (strain 972 / ATCC 24843) (Fission yeast) protein is Large ribosomal subunit protein P2B (rpp202).